Consider the following 418-residue polypeptide: Cyclin-A1 (418 aa).

The protein belongs to the cyclin family. Cyclin AB subfamily. In terms of assembly, interacts with the CDK1 and the CDK2 protein kinases to form a serine/threonine kinase holoenzyme complex. The cyclin subunit imparts substrate specificity to the complex.

It localises to the nucleus. Functionally, may be involved in the control of the cell cycle at the G1/S (start) and G2/M (mitosis) transitions. The protein is Cyclin-A1 (ccna1) of Xenopus laevis (African clawed frog).